The following is a 424-amino-acid chain: Cuticlin-1 (424 aa).

The first 18 residues, 1-18 (MTWKPIICLAALVLSASA), serve as a signal peptide directing secretion. The Extracellular portion of the chain corresponds to 19–392 (IPVDNNVEGE…ATSTGICLTP (374 aa)). The ZP domain maps to 32–277 (ECGPNSITVN…PTCSEPQGFG (246 aa)). Residues cysteine 197 and cysteine 252 are joined by a disulfide bond. A run of 4 repeats spans residues 302–305 (AAPV), 307–311 (AAAPV), 312–315 (AAPV), and 320–323 (AAPA). Residues 302–323 (AAPVAAAAPVAAPVAAAAAAPA) form a 4 X 4 AA repeats of A-A-P-[AVI] region. The helical transmembrane segment at 393 to 413 (IGFASFLGIGTIVATALSATI) threads the bilayer. The Cytoplasmic portion of the chain corresponds to 414 to 424 (FYVARPTSHKH).

The protein resides in the cell membrane. Its subcellular location is the secreted. Its function is as follows. Component of the cuticles, which contributes to the formation of extracellular envelopes protecting the organism from the environment. Plays a role in alae formation in dauer larvae. This chain is Cuticlin-1, found in Caenorhabditis elegans.